The primary structure comprises 377 residues: Circumsporozoite protein (377 aa).

A signal peptide spans 1-22; it reads MKNFILLAVSSILLVDLFPTHC. A disordered region spans residues 51 to 294; it reads HVGQSASRGR…NNEGANAPNE (244 aa). Basic and acidic residues predominate over residues 72–100; the sequence is DAKKKKDGKKAEPKNPRENKLKQPGDRAD. Residues 80–88 are required for the binding to heparan sulfate proteoglycans (HSPGs) on the surface of host hepatocytes; sequence KKAEPKNPR. The interval 91–95 is region I; contains the proteolytic cleavage site; sequence KLKQP. 20 consecutive repeat copies span residues 95–103, 104–112, 113–121, 122–130, 131–139, 140–148, 149–157, 158–166, 167–175, 176–184, 185–193, 194–202, 203–211, 212–220, 221–229, 230–238, 239–247, 248–256, 257–265, and 266–274. Positions 95 to 274 are 20 X 9 AA tandem repeats of [PA]-G-D-R-A-[DA]-G-Q-[PA]; it reads PGDRADGQPA…AAGDRAAGQA (180 aa). Over residues 236-273 the composition is skewed to low complexity; it reads GQPAGDRAAGQPAGDRAAGQPAGDRAAGQAAGDRAAGQ. Over residues 274 to 283 the composition is skewed to gly residues; sequence AAGGNAGGQG. Residues 284–293 are compositionally biased toward low complexity; that stretch reads QNNEGANAPN. A TSP type-1 domain is found at 303–355; it reads KVRATVGTEWTPCSVTCGVGVRVRRRVNAANKKPEDLTLNDLETDVCTMDKCA. Disulfide bonds link Cys315–Cys349 and Cys319–Cys354. O-linked (Fuc) threonine glycosylation occurs at Thr318. The GPI-anchor amidated cysteine moiety is linked to residue Cys354. Positions 355–377 are cleaved as a propeptide — removed in mature form; that stretch reads AGIFNVVSNSLGLVILLVLALFN.

This sequence belongs to the plasmodium circumsporozoite protein family. In terms of processing, during host cell invasion, proteolytically cleaved at the cell membrane in the region I by a papain-like cysteine protease of parasite origin. Cleavage is triggered by the sporozoite contact with highly sulfated heparan sulfate proteoglycans (HSPGs) present on the host hepatocyte cell surface. Cleavage exposes the TSP type-1 (TSR) domain and is required for productive invasion of host hepatocytes but not for adhesion to the host cell membrane. Cleavage is dispensable for sporozoite development in the oocyst, motility and for traversal of host and vector cells. Post-translationally, O-glycosylated; maybe by POFUT2.

It localises to the cell membrane. It is found in the cytoplasm. In terms of biological role, essential sporozoite protein. In the mosquito vector, required for sporozoite development in the oocyst, migration through the vector hemolymph and entry into the vector salivary glands. In the vertebrate host, required for sporozoite migration through the host dermis and infection of host hepatocytes. Binds to highly sulfated heparan sulfate proteoglycans (HSPGs) on the surface of host hepatocytes. Functionally, in the vertebrate host, binds to highly sulfated heparan sulfate proteoglycans (HSPGs) on the surface of host hepatocytes and is required for sporozoite invasion of the host hepatocytes. The chain is Circumsporozoite protein from Plasmodium vivax (strain Salvador I).